A 66-amino-acid chain; its full sequence is Large ribosomal subunit protein bL32 (66 aa).

It belongs to the bacterial ribosomal protein bL32 family.

This chain is Large ribosomal subunit protein bL32, found in Rickettsia bellii (strain OSU 85-389).